A 290-amino-acid polypeptide reads, in one-letter code: Arylamine N-acetyltransferase 2 (290 aa).

The Acyl-thioester intermediate role is filled by Cys68. Positions 103 and 104 each coordinate CoA. 106-107 (IH) is a substrate binding site. Active-site residues include His107 and Asp122. Residue Tyr208 coordinates CoA.

This sequence belongs to the arylamine N-acetyltransferase family.

It is found in the cytoplasm. It carries out the reaction an arylamine + acetyl-CoA = an N-acetylarylamine + CoA. The enzyme catalyses an N-hydroxyarylamine + acetyl-CoA = an N-acetoxyarylamine + CoA. In terms of biological role, catalyzes the N- or O-acetylation of various arylamine and heterocyclic amine substrates, and participates in the detoxification of a plethora of hydrazine and arylamine drugs. In Mesocricetus auratus (Golden hamster), this protein is Arylamine N-acetyltransferase 2 (NAT2).